Reading from the N-terminus, the 683-residue chain is MDDYRYRDNYEGYAPNDGYYRGNEQNPEEDAQSDVTEGHDEEDEIYEGEYQGIPHPDDVKSKQTKMAPSRADGLRGQADLMAERMEDEEQLAHQYETIIDECGHGRFQWTLFFVLVLALMADGVEVFVVSFALPSAEKDMCLSSSKKGMLGLIVYLGMMAGAFILGGLADKLGRKKVLSMSLAINASFASLSSFVQGYGAFLFCRLISGIGIGGSLPIVFAYFSEFLSREKRGEHLSWLGIFWMTGGIYASAMAWSIIPHYGWGFSMGTNYHFHSWRVFVIVCALPATVSMVALKFMPESPRFLLEMGKHDEAWMILKQVHDTNMRAKGTPEKVFTVSHIKTPKQMDEFIEIQSSTGTWYQRWLVRFMTIFKQVWDNALYCVMGPYRMNTLILAVVWFTMALSYYGLTVWFPDMIRYFQDEEYKSKMKVFFGEHVHGATINFTMENQIHQHGKLVNDKFIKMYFKHVLFEDTFFDKCYFEDVTSTDTYFKNCTIESTTFYNTDLYKHKFIDCRFINSTFLEQKEGCHMDFEEDNDFLIYLVSFLGSLSVLPGNIISALLMDRIGRLKMIGGSMLISAVCCFFLFFGNSESAMIGWQCLFCGTSIAAWNALDVITVELYPTNQRATAFGILNGLCKLGAILGNTIFASFVGITKVVPILLAAASLVGGGLVALRLPETREQVLM.

Over residues 1–10 (MDDYRYRDNY) the composition is skewed to basic and acidic residues. The segment at 1-72 (MDDYRYRDNY…QTKMAPSRAD (72 aa)) is disordered. Topologically, residues 1-110 (MDDYRYRDNY…ECGHGRFQWT (110 aa)) are cytoplasmic. The residue at position 33 (Ser-33) is a Phosphoserine. A Phosphothreonine modification is found at Thr-36. Residues 111–131 (LFFVLVLALMADGVEVFVVSF) traverse the membrane as a helical segment. Residues 132-148 (ALPSAEKDMCLSSSKKG) are Extracellular-facing. A helical membrane pass occupies residues 149–169 (MLGLIVYLGMMAGAFILGGLA). Topologically, residues 170–182 (DKLGRKKVLSMSL) are cytoplasmic. The helical transmembrane segment at 183 to 203 (AINASFASLSSFVQGYGAFLF) threads the bilayer. At 204–205 (CR) the chain is on the extracellular side. The chain crosses the membrane as a helical span at residues 206-226 (LISGIGIGGSLPIVFAYFSEF). Topologically, residues 227-237 (LSREKRGEHLS) are cytoplasmic. The helical transmembrane segment at 238-258 (WLGIFWMTGGIYASAMAWSII) threads the bilayer. The Extracellular portion of the chain corresponds to 259–277 (PHYGWGFSMGTNYHFHSWR). Residues 278–298 (VFVIVCALPATVSMVALKFMP) form a helical membrane-spanning segment. The Cytoplasmic portion of the chain corresponds to 299 to 390 (ESPRFLLEMG…CVMGPYRMNT (92 aa)). A helical transmembrane segment spans residues 391–411 (LILAVVWFTMALSYYGLTVWF). Topologically, residues 412–535 (PDMIRYFQDE…CHMDFEEDND (124 aa)) are extracellular. Tyr-423 carries the phosphotyrosine modification. N-linked (GlcNAc...) asparagine glycans are attached at residues Asn-441, Asn-491, and Asn-516. Residues 536 to 556 (FLIYLVSFLGSLSVLPGNIIS) form a helical membrane-spanning segment. Over 557 to 565 (ALLMDRIGR) the chain is Cytoplasmic. The chain crosses the membrane as a helical span at residues 566 to 586 (LKMIGGSMLISAVCCFFLFFG). Over 587–592 (NSESAM) the chain is Extracellular. Residues 593–613 (IGWQCLFCGTSIAAWNALDVI) form a helical membrane-spanning segment. At 614-626 (TVELYPTNQRATA) the chain is on the cytoplasmic side. Residues 627–649 (FGILNGLCKLGAILGNTIFASFV) form a helical membrane-spanning segment. The Extracellular portion of the chain corresponds to 650 to 653 (GITK). A helical transmembrane segment spans residues 654 to 672 (VVPILLAAASLVGGGLVAL). Residues 673–683 (RLPETREQVLM) are Cytoplasmic-facing.

It belongs to the major facilitator superfamily. In terms of assembly, interacts with SYT1 in a calcium-independent manner. Forms a complex with SYT1, syntaxin-1 and SNAP25. (Microbial infection) Interacts with C.botulinum neurotoxin type A1 and type A2 (BoNT/A, botA). Interaction is improved by glycosylation of SV2. As to quaternary structure, (Microbial infection) Interacts with C.botulinum neurotoxin type D (BoNT/D, botD). In terms of assembly, (Microbial infection) Interacts with C.botulinum neurotoxin type E (BoNT/E). Interaction requires glycosylation of SV2 proteins. (Microbial infection) Interacts with C.botulinum neurotoxin type F (BoNT/F). Interaction requires glycosylation of SV2 proteins. N-glycosylated. Post-translationally, the N-terminal cytoplasmic domain is phosphorylated by CK1. In terms of tissue distribution, widely expressed throughout the brain. Specifically expressed by pinealocytes in the pineal gland. Also detected in testis (at protein level). Specifically expressed in neural tissues. Expressed in the spinal cord and in all brain regions with a stronger expression in hippocampus and cortex.

Its subcellular location is the cytoplasmic vesicle. The protein localises to the secretory vesicle. It localises to the synaptic vesicle membrane. It is found in the acrosome. Functionally, probably plays a role in the control of regulated secretion in neural and endocrine cells. Its function is as follows. (Microbial infection) Receptor for C.botulinum neurotoxin type A (BoNT/A, botA); the toxin binds via extracellular loop 4. Restores uptake of BoNT/A in mouse and rat cells that are deleted for SV2 receptor. Glycosylation of SV2B is not essential for receptor activity, but enhances the interaction. Also serves as a receptor for the closely related C.botulinum neurotoxin type A2; glycosylation is not essential but enhances the interaction. (Microbial infection) Possible receptor for C.botulinum neurotoxin type D (BoNT/D, botD); BoNT/D does not bind to extracellular loop 4 as do BoNT/A and BoNT/E. Another group does not find a convincing interaction with SV2. In terms of biological role, (Microbial infection) Receptor for C.botulinum neurotoxin type E (BoNT/E); the toxin probably binds via extracellular loop 4. Restores uptake of BoNT/E in mouse cells that are deleted for SV2 receptor. Glycosylation of SV2B is not essential for receptor activity, but enhances the interaction. Functionally, (Microbial infection) Receptor for C.botulinum neurotoxin type F (BoNT/F); binding requires glycosylation of this protein. This chain is Synaptic vesicle glycoprotein 2B (Sv2b), found in Rattus norvegicus (Rat).